The sequence spans 67 residues: Protein C' (67 aa).

Belongs to the rhabdoviruses C protein family.

Its function is as follows. Seems to stimulates transcription by the viral polymerase. May play a role in viral pathogenesis or transmission by insects vectors. This is Protein C' (P) from Aedes (Bovine).